Consider the following 313-residue polypeptide: Ribose 1,5-bisphosphate isomerase (313 aa).

Substrate-binding positions include 17–20 (RGAA) and arginine 57. Cysteine 121 serves as the catalytic Proton acceptor. Aspartate 190 functions as the Proton donor in the catalytic mechanism. Substrate is bound by residues 200–201 (NK) and lysine 226.

It belongs to the eIF-2B alpha/beta/delta subunits family. R15P isomerase subfamily.

The enzyme catalyses alpha-D-ribose 1,5-bisphosphate = D-ribulose 1,5-bisphosphate. Catalyzes the isomerization of ribose 1,5-bisphosphate (R15P) to ribulose 1,5-bisphosphate (RuBP), the CO(2) acceptor and substrate for RubisCO. Functions in an archaeal AMP degradation pathway, together with AMP phosphorylase and RubisCO. The polypeptide is Ribose 1,5-bisphosphate isomerase (Archaeoglobus fulgidus (strain ATCC 49558 / DSM 4304 / JCM 9628 / NBRC 100126 / VC-16)).